The following is a 547-amino-acid chain: Chaperonin GroEL (547 aa).

Residues 30–33 (TLGP), Lys-51, 87–91 (DGTTT), Gly-415, and Asp-496 each bind ATP.

The protein belongs to the chaperonin (HSP60) family. Forms a cylinder of 14 subunits composed of two heptameric rings stacked back-to-back. Interacts with the co-chaperonin GroES.

The protein localises to the cytoplasm. The catalysed reaction is ATP + H2O + a folded polypeptide = ADP + phosphate + an unfolded polypeptide.. Together with its co-chaperonin GroES, plays an essential role in assisting protein folding. The GroEL-GroES system forms a nano-cage that allows encapsulation of the non-native substrate proteins and provides a physical environment optimized to promote and accelerate protein folding. This is Chaperonin GroEL from Actinobacillus succinogenes (strain ATCC 55618 / DSM 22257 / CCUG 43843 / 130Z).